The following is a 326-amino-acid chain: Putative ubiquitin-conjugating enzyme E2 38 (326 aa).

Residues 54–214 (NWVKKVQDEW…VFLLSLKTMV (161 aa)) form the UBC core domain. Cys-140 acts as the Glycyl thioester intermediate in catalysis. The segment at 297–326 (LAEKPKPPVNNANTENQSKKKTRKRSRSSR) is disordered. The segment covering 315 to 326 (KKKTRKRSRSSR) has biased composition (basic residues).

It belongs to the ubiquitin-conjugating enzyme family.

The enzyme catalyses S-ubiquitinyl-[E1 ubiquitin-activating enzyme]-L-cysteine + [E2 ubiquitin-conjugating enzyme]-L-cysteine = [E1 ubiquitin-activating enzyme]-L-cysteine + S-ubiquitinyl-[E2 ubiquitin-conjugating enzyme]-L-cysteine.. Its pathway is protein modification; protein ubiquitination. In terms of biological role, accepts the ubiquitin from the E1 complex and catalyzes its covalent attachment to other proteins. This chain is Putative ubiquitin-conjugating enzyme E2 38 (UBC38), found in Arabidopsis thaliana (Mouse-ear cress).